The sequence spans 236 residues: 2,3,4,5-tetrahydropyridine-2,6-dicarboxylate N-acetyltransferase (236 aa).

This sequence belongs to the transferase hexapeptide repeat family. DapH subfamily.

It catalyses the reaction (S)-2,3,4,5-tetrahydrodipicolinate + acetyl-CoA + H2O = L-2-acetamido-6-oxoheptanedioate + CoA. The protein operates within amino-acid biosynthesis; L-lysine biosynthesis via DAP pathway; LL-2,6-diaminopimelate from (S)-tetrahydrodipicolinate (acetylase route): step 1/3. In terms of biological role, catalyzes the transfer of an acetyl group from acetyl-CoA to tetrahydrodipicolinate. The chain is 2,3,4,5-tetrahydropyridine-2,6-dicarboxylate N-acetyltransferase from Clostridium botulinum (strain Okra / Type B1).